A 304-amino-acid polypeptide reads, in one-letter code: MSHLLTMSELSEVEISEILKDAEDFANGKESKTTEQTFVANLFFENSTRTRFSFEVAEKRLGLDVLNFSADASSVQKGETLYDTIRTLESIGTKAVIVRHEQDRYFDELKDQVNIPILNAGDGCGNHPTQCLLDLLTIKQEFGRFEGLKIAIVGDVRHSRVARSNAEALTKLGATIYFASPEEWKDEDSTFGTYKPLDELVPEVDVMMLLRVQHERHDHYETDIMKEYHERHGLTVEREKRMKEGSIIMHPAPVNRDVEVASELVECERSRIFKQMENGVYVRMAVLKRALPNVLGGMKHELLV.

Residues arginine 49 and threonine 50 each contribute to the carbamoyl phosphate site. Lysine 77 provides a ligand contact to L-aspartate. Carbamoyl phosphate is bound by residues arginine 99, histidine 127, and glutamine 130. L-aspartate-binding residues include arginine 160 and arginine 211. Alanine 252 and proline 253 together coordinate carbamoyl phosphate.

The protein belongs to the aspartate/ornithine carbamoyltransferase superfamily. ATCase family. In terms of assembly, heterododecamer (2C3:3R2) of six catalytic PyrB chains organized as two trimers (C3), and six regulatory PyrI chains organized as three dimers (R2).

The enzyme catalyses carbamoyl phosphate + L-aspartate = N-carbamoyl-L-aspartate + phosphate + H(+). The protein operates within pyrimidine metabolism; UMP biosynthesis via de novo pathway; (S)-dihydroorotate from bicarbonate: step 2/3. Catalyzes the condensation of carbamoyl phosphate and aspartate to form carbamoyl aspartate and inorganic phosphate, the committed step in the de novo pyrimidine nucleotide biosynthesis pathway. The polypeptide is Aspartate carbamoyltransferase catalytic subunit (Bacillus cereus (strain G9842)).